A 114-amino-acid polypeptide reads, in one-letter code: Iron-sulfur cluster insertion protein ErpA (114 aa).

Residues Cys-42, Cys-106, and Cys-108 each coordinate iron-sulfur cluster.

Belongs to the HesB/IscA family. In terms of assembly, homodimer. Iron-sulfur cluster is required as a cofactor.

Functionally, required for insertion of 4Fe-4S clusters for at least IspG. The chain is Iron-sulfur cluster insertion protein ErpA from Enterobacter sp. (strain 638).